The primary structure comprises 115 residues: Putative TGFB1-induced anti-apoptotic factor 1 (115 aa).

In terms of tissue distribution, not detectable in normal kidney and liver. Up-regulated in chronic and acute allograft rejection: expressed in the inflammatory infiltrate and in tubular epithelial cells.

It is found in the nucleus. In terms of biological role, inhibits the cytotoxic effects of TNF-alpha and overexpressed TNF receptor adapters TRADD, FADD, and RIPK1. Involved in TGF-beta1 inhibition of IkappaB-alpha expression and suppression of TNF-mediated IkappaB-alpha degradation. The sequence is that of Putative TGFB1-induced anti-apoptotic factor 1 (MYO18A) from Homo sapiens (Human).